The chain runs to 494 residues: Nuclear distribution protein PAC1 (494 aa).

In terms of domain architecture, LisH spans 14–46; it reads QKNELDKSVLRYLNWNYKQTVRHEHAQDYESVR. A coiled-coil region spans residues 90 to 123; the sequence is NSIVRLQKKIIELEQNTETLVSQIKDLNTQVSEL. WD repeat units lie at residues 153–192, 196–244, 251–292, 295–334, 347–395, 415–454, and 457–492; these read NVES…IPLA, SHTK…CKFQ, GHEH…SLKT, PHSQ…SVGT, HFIE…LMAH, GHLS…HVWE, and HTGF…SNVF.

It belongs to the WD repeat LIS1/nudF family. In terms of assembly, self-associates. Interacts with NDL1 and dynein.

Its subcellular location is the cytoplasm. It localises to the cytoskeleton. The protein resides in the spindle pole. Its function is as follows. Positively regulates the activity of the minus-end directed microtubule motor protein dynein. Plays a central role in positioning the mitotic spindle at the bud neck during cell division. Targets cytoplasmic dynein to microtubule plus ends, thereby promoting dynein-mediated microtubule sliding along the bud cortex and consequently the movement of the mitotic spindle to the bud neck. In Saccharomyces cerevisiae (strain Lalvin EC1118 / Prise de mousse) (Baker's yeast), this protein is Nuclear distribution protein PAC1.